We begin with the raw amino-acid sequence, 78 residues long: MKSSVNIQDHFLNQLRKENIPVTVFLLNGFQLRGLVKGFDNFTVILETEGKQQLVYKHAISTFAPQRNVQMKTENEPS.

The 61-residue stretch at 9–69 folds into the Sm domain; it reads DHFLNQLRKE…ISTFAPQRNV (61 aa).

This sequence belongs to the Hfq family. Homohexamer.

RNA chaperone that binds small regulatory RNA (sRNAs) and mRNAs to facilitate mRNA translational regulation in response to envelope stress, environmental stress and changes in metabolite concentrations. Also binds with high specificity to tRNAs. The polypeptide is RNA-binding protein Hfq (Halalkalibacterium halodurans (strain ATCC BAA-125 / DSM 18197 / FERM 7344 / JCM 9153 / C-125) (Bacillus halodurans)).